We begin with the raw amino-acid sequence, 175 residues long: NADH-ubiquinone oxidoreductase chain 6 (175 aa).

Helical transmembrane passes span 1-21 (MMTY…VGFS), 25-45 (SPIY…GIVL), 47-67 (FGGS…MLVV), 88-108 (AVLG…CYIL), and 149-169 (YGTW…LVIM).

Belongs to the complex I subunit 6 family. In terms of assembly, core subunit of respiratory chain NADH dehydrogenase (Complex I) which is composed of 45 different subunits.

The protein localises to the mitochondrion inner membrane. It carries out the reaction a ubiquinone + NADH + 5 H(+)(in) = a ubiquinol + NAD(+) + 4 H(+)(out). Functionally, core subunit of the mitochondrial membrane respiratory chain NADH dehydrogenase (Complex I) which catalyzes electron transfer from NADH through the respiratory chain, using ubiquinone as an electron acceptor. Essential for the catalytic activity and assembly of complex I. In Phoca vitulina (Harbor seal), this protein is NADH-ubiquinone oxidoreductase chain 6 (MT-ND6).